We begin with the raw amino-acid sequence, 78 residues long: Probable [Fe-S]-dependent transcriptional repressor (78 aa).

4 residues coordinate iron-sulfur cluster: cysteine 56, cysteine 61, cysteine 64, and cysteine 70.

It belongs to the FeoC family.

Its function is as follows. May function as a transcriptional regulator that controls feoABC expression. The protein is Probable [Fe-S]-dependent transcriptional repressor of Escherichia coli O127:H6 (strain E2348/69 / EPEC).